Reading from the N-terminus, the 308-residue chain is Aspartate carbamoyltransferase catalytic subunit (308 aa).

2 residues coordinate carbamoyl phosphate: Arg-59 and Thr-60. L-aspartate is bound at residue Lys-87. Residues Arg-109, His-139, and Gln-142 each contribute to the carbamoyl phosphate site. L-aspartate contacts are provided by Arg-172 and Arg-224. Carbamoyl phosphate-binding residues include Ala-265 and Pro-266.

It belongs to the aspartate/ornithine carbamoyltransferase superfamily. ATCase family. In terms of assembly, heterododecamer (2C3:3R2) of six catalytic PyrB chains organized as two trimers (C3), and six regulatory PyrI chains organized as three dimers (R2).

The catalysed reaction is carbamoyl phosphate + L-aspartate = N-carbamoyl-L-aspartate + phosphate + H(+). It functions in the pathway pyrimidine metabolism; UMP biosynthesis via de novo pathway; (S)-dihydroorotate from bicarbonate: step 2/3. Its function is as follows. Catalyzes the condensation of carbamoyl phosphate and aspartate to form carbamoyl aspartate and inorganic phosphate, the committed step in the de novo pyrimidine nucleotide biosynthesis pathway. This Streptococcus thermophilus (strain ATCC BAA-491 / LMD-9) protein is Aspartate carbamoyltransferase catalytic subunit.